The sequence spans 339 residues: Methionine import ATP-binding protein MetN 1 (339 aa).

Residues 2–241 (ISFNNVSKVY…PKTKTTQNFV (240 aa)) form the ABC transporter domain. An ATP-binding site is contributed by 38–45 (GFSGAGKS).

The protein belongs to the ABC transporter superfamily. Methionine importer (TC 3.A.1.24) family. In terms of assembly, the complex is composed of two ATP-binding proteins (MetN), two transmembrane proteins (MetI) and a solute-binding protein (MetQ).

It localises to the cell membrane. It catalyses the reaction L-methionine(out) + ATP + H2O = L-methionine(in) + ADP + phosphate + H(+). The catalysed reaction is D-methionine(out) + ATP + H2O = D-methionine(in) + ADP + phosphate + H(+). Part of the ABC transporter complex MetNIQ involved in methionine import. Responsible for energy coupling to the transport system. The chain is Methionine import ATP-binding protein MetN 1 from Bacillus thuringiensis subsp. konkukian (strain 97-27).